The following is a 174-amino-acid chain: Cytidylate kinase (174 aa).

ATP is bound at residue 7-15 (GLPGTGTTT).

Belongs to the cytidylate kinase family. Type 2 subfamily.

Its subcellular location is the cytoplasm. The enzyme catalyses CMP + ATP = CDP + ADP. It carries out the reaction dCMP + ATP = dCDP + ADP. In Methanococcus vannielii (strain ATCC 35089 / DSM 1224 / JCM 13029 / OCM 148 / SB), this protein is Cytidylate kinase.